Reading from the N-terminus, the 978-residue chain is MASQPPAAVEARLADLCKELGVDEGVAGEAAAVLEEGKGALLASPSFGSKSPEDAEKLCFAFVLYCVSKLKETKAGSSGVRLWEILKGCKLKYDDFFKESQRLASRIDQVLGSRYGSDWEARLELKQLENLVNLLADASRFYCKAFNELFLSPSTDQEPGSTTNIPDYIRFGWLLFLILRSKSPELFKDLVSCIHGLVAILAILLIHVPAKFRSFTIEGSSHLIKQTEKGVDLLPSLCHNYHTSEDRLKEMMGKSYKVIEVFFSRKAINASEFKTVNLDKIDTDGLMYFKDLVDDEIFQSNLEKLEKLSSTTGCQGELDLEMFLTSNDYVLNAENSSGSSANFGCSKRVFETLASPTKTIKNMLAAPSSPSSPANGGSIKIVQMTPVTSAMTTAKWLRDVISSLPDKPSSKLEEFLSSCDTDLTSDVVKRVSIILEAIFPTKSIDRGTSIGLNCANAFDIPWAEARKMEASKLYYRVLEAICRAESQNNNVNNLTPLLSNERFHRCLIACSAELVLATHKTVIMMFPAVLESTGLTAFDLSKIIENFVRHEETLPRELKRHLNSLEEQLLESMSWEKGSSLYNSLVVARPSLSTEINSLGLLAEPMPSLDGIVARQSIHPDGLPPTPSKRWPSAGPDGNCYPQSPKRLCTESRNSLVERNSQTPPPKQSQTGLSILKAKYHPLQATFASPTVSNPVSGNEKCAVVGVQIFFSKILKLAAIRIRNLCERLRHEELTVSVYNIFKQILDQQTALFFNRHVDQIILCCLYGVAKVSQLSLTFKEIVNNYKREPQCKPEVFRSIFVGSTNRNGGFGSRHVDIIVFYNQVFVPTVKPLLVALMPSSTRPEDKRNTNSQIPGSPKSSPFSNLPDMSPKKVSSSHNVYVSPLRQTKMDALLSPSSRSFYACIGESTQAFQSPSKDLAAINSRLNYPTRRINTRINFDMVSDSVVAGSLGQPNGGSASSDPAAAFSPLSKKSKTDS.

A domain A region spans residues Thr-385 to Leu-585. The segment at Thr-385–Pro-832 is pocket. The segment at Val-586–Val-704 is spacer. The interval Gln-616–Pro-645 is disordered. The tract at residues Val-705 to Pro-832 is domain B. 2 disordered regions span residues Ser-841 to His-878 and Val-947 to Ser-978. Over residues Thr-850–Ser-864 the composition is skewed to polar residues. Residues Ser-958–Ser-971 show a composition bias toward low complexity.

The protein belongs to the retinoblastoma protein (RB) family.

Its subcellular location is the nucleus. In terms of biological role, regulator of biological processes that recruits a histone deacetylase to control gene transcription. May play a role in the entry into mitosis, negatively regulating the cell proliferation. Formation of stable complexes with geminiviridae replication-associated proteins may create a cellular environment which favors viral DNA replication. This is Retinoblastoma-related protein 2 (RBR2) from Oryza sativa subsp. japonica (Rice).